A 617-amino-acid polypeptide reads, in one-letter code: ATP-dependent zinc metalloprotease FtsH (617 aa).

Residues 1–7 (MKIPFDR) lie on the Cytoplasmic side of the membrane. Residues 8 to 28 (WLGWPTLLLLLLGLWLLGSSL) form a helical membrane-spanning segment. Residues 29–102 (RDQRTVEAVP…VSYRRVRESN (74 aa)) lie on the Periplasmic side of the membrane. A helical membrane pass occupies residues 103–123 (WLSQLLSWMAGPLLLLGFWYF). Topologically, residues 124–617 (MSRRIDGQQG…GRPAAIRQVA (494 aa)) are cytoplasmic. 198–205 (GPTGTGKT) is an ATP binding site. Position 421 (histidine 421) interacts with Zn(2+). Glutamate 422 is an active-site residue. Residues histidine 425 and aspartate 498 each contribute to the Zn(2+) site.

In the central section; belongs to the AAA ATPase family. It in the C-terminal section; belongs to the peptidase M41 family. Homohexamer. It depends on Zn(2+) as a cofactor.

The protein resides in the cell inner membrane. Its function is as follows. Acts as a processive, ATP-dependent zinc metallopeptidase for both cytoplasmic and membrane proteins. Plays a role in the quality control of integral membrane proteins. This is ATP-dependent zinc metalloprotease FtsH from Methylibium petroleiphilum (strain ATCC BAA-1232 / LMG 22953 / PM1).